A 317-amino-acid chain; its full sequence is Transcriptional activator protein med (317 aa).

Residues 1–17 (MITRLVMIFSVLLLLSG) form the signal peptide. A lipid anchor (N-palmitoyl cysteine) is attached at cysteine 18. Cysteine 18 carries S-diacylglycerol cysteine lipidation.

It belongs to the BMP lipoprotein family.

The protein resides in the cell membrane. Positive activator of the comK gene. The sequence is that of Transcriptional activator protein med (med) from Bacillus subtilis (strain 168).